Reading from the N-terminus, the 643-residue chain is Extracellular metalloproteinase 4 (643 aa).

The N-terminal stretch at 1–18 (MHGLLLAGLLALPLNVLA) is a signal peptide. The propeptide occupies 19–254 (HPTESHSSGI…VHSVVDYVSA (236 aa)). The segment covering 47 to 57 (TKSDAVPKQDD) has biased composition (basic and acidic residues). The disordered stretch occupies residues 47 to 71 (TKSDAVPKQDDESFTTSSTGDDNVS). Positions 60-71 (FTTSSTGDDNVS) are enriched in polar residues. 2 N-linked (GlcNAc...) asparagine glycosylation sites follow: N271 and N420. H437 is a binding site for Zn(2+). E438 is a catalytic residue. Position 441 (H441) interacts with Zn(2+). Residues N510 and N553 are each glycosylated (N-linked (GlcNAc...) asparagine).

Belongs to the peptidase M36 family. Zn(2+) is required as a cofactor.

The protein resides in the secreted. Functionally, secreted metalloproteinase probably acting as a virulence factor. This is Extracellular metalloproteinase 4 (MEP4) from Arthroderma benhamiae (Trichophyton mentagrophytes).